The following is a 459-amino-acid chain: Argininosuccinate lyase (459 aa).

This sequence belongs to the lyase 1 family. Argininosuccinate lyase subfamily.

It localises to the cytoplasm. The catalysed reaction is 2-(N(omega)-L-arginino)succinate = fumarate + L-arginine. It functions in the pathway amino-acid biosynthesis; L-arginine biosynthesis; L-arginine from L-ornithine and carbamoyl phosphate: step 3/3. The chain is Argininosuccinate lyase from Prochlorococcus marinus (strain MIT 9515).